The following is a 138-amino-acid chain: Ribulose bisphosphate carboxylase small subunit (138 aa).

Belongs to the RuBisCO small chain family. As to quaternary structure, heterohexadecamer of 8 large and 8 small subunits.

Its subcellular location is the plastid. The protein resides in the chloroplast. Functionally, ruBisCO catalyzes two reactions: the carboxylation of D-ribulose 1,5-bisphosphate, the primary event in carbon dioxide fixation, as well as the oxidative fragmentation of the pentose substrate in the photorespiration process. Both reactions occur simultaneously and in competition at the same active site. Although the small subunit is not catalytic it is essential for maximal activity. Carbon dioxide and oxygen bind in the same pocket of the enzyme in a similar manner. This Galdieria sulphuraria (Red alga) protein is Ribulose bisphosphate carboxylase small subunit.